We begin with the raw amino-acid sequence, 314 residues long: Olfactory receptor-like protein I9 (314 aa).

Residues 1 to 25 (MTRRNQTAISQFFLLGLPFPPEYQH) lie on the Extracellular side of the membrane. N-linked (GlcNAc...) asparagine glycosylation occurs at Asn-5. Residues 26–50 (LFYALFLAMYLTTLLGNLIIIILIL) traverse the membrane as a helical segment. The Cytoplasmic segment spans residues 51–57 (LDSHLHT). A helical membrane pass occupies residues 58–79 (PMYLFLSNLSFADLCFSSVTMP). Topologically, residues 80–100 (KLLQNMQSQVPSIPYAGCLAQ) are extracellular. Cys-97 and Cys-189 are joined by a disulfide. Residues 101-120 (IYFFLFFGDLGNFLLVAMAY) form a helical membrane-spanning segment. At 121–139 (DRYVAICFPLHYMSIMSPK) the chain is on the cytoplasmic side. A helical membrane pass occupies residues 140–158 (LCVSLVVLSWVLTTFHAML). Residues 159-196 (HTLLMARLSFCEDSVIPHYFCDMSTLLKVACSDTHDNE) are Extracellular-facing. Residues 197–219 (LAIFILGGPIVVLPFLLIIVSYA) traverse the membrane as a helical segment. The Cytoplasmic segment spans residues 220–236 (RIVSSIFKVPSSQSIHK). The helical transmembrane segment at 237–260 (AFSTCGSHLSVVSLFYGTVIGLYL) threads the bilayer. The Extracellular segment spans residues 261 to 272 (CPSANNSTVKET). Residues 273-292 (VMSLMYTMVTPMLNPFIYSL) form a helical membrane-spanning segment. The Cytoplasmic segment spans residues 293 to 314 (RNRDIKDALEKIMCKKQIPSFL).

Belongs to the G-protein coupled receptor 1 family. In terms of tissue distribution, olfactory epithelium.

It localises to the cell membrane. Odorant receptor. The polypeptide is Olfactory receptor-like protein I9 (Rattus norvegicus (Rat)).